The primary structure comprises 221 residues: Large ribosomal subunit protein uL3 (221 aa).

It belongs to the universal ribosomal protein uL3 family. Part of the 50S ribosomal subunit. Forms a cluster with proteins L14 and L19.

Functionally, one of the primary rRNA binding proteins, it binds directly near the 3'-end of the 23S rRNA, where it nucleates assembly of the 50S subunit. The chain is Large ribosomal subunit protein uL3 from Chlamydia abortus (strain DSM 27085 / S26/3) (Chlamydophila abortus).